A 269-amino-acid chain; its full sequence is Dynein regulatory complex protein 8 (269 aa).

Residues 1–113 (MLGPGQVRLR…RTGKGLGYNS (113 aa)) form a disordered region. Residues 54–76 (AQGSSSPGIQSGPSSRPGSPRGA) show a composition bias toward low complexity. EF-hand domains lie at 150–185 (EFHK…LGCC) and 228–263 (IPED…EDGV).

It belongs to the DRC8 family. In terms of assembly, component of the nexin-dynein regulatory complex (N-DRC).

It is found in the cytoplasm. Its subcellular location is the cytoskeleton. The protein localises to the flagellum axoneme. Its function is as follows. Component of the nexin-dynein regulatory complex (N-DRC), a key regulator of ciliary/flagellar motility which maintains the alignment and integrity of the distal axoneme and regulates microtubule sliding in motile axonemes. The sequence is that of Dynein regulatory complex protein 8 (EFCAB2) from Homo sapiens (Human).